Consider the following 651-residue polypeptide: Threonine--tRNA ligase (651 aa).

Residues Met-1 to Lys-61 form the TGS domain. The catalytic stretch occupies residues Asp-242–Pro-541. Residues Cys-337, His-388, and His-518 each coordinate Zn(2+).

It belongs to the class-II aminoacyl-tRNA synthetase family. As to quaternary structure, homodimer. Requires Zn(2+) as cofactor.

Its subcellular location is the cytoplasm. It carries out the reaction tRNA(Thr) + L-threonine + ATP = L-threonyl-tRNA(Thr) + AMP + diphosphate + H(+). Functionally, catalyzes the attachment of threonine to tRNA(Thr) in a two-step reaction: L-threonine is first activated by ATP to form Thr-AMP and then transferred to the acceptor end of tRNA(Thr). Also edits incorrectly charged L-seryl-tRNA(Thr). This is Threonine--tRNA ligase from Parabacteroides distasonis (strain ATCC 8503 / DSM 20701 / CIP 104284 / JCM 5825 / NCTC 11152).